Here is a 166-residue protein sequence, read N- to C-terminus: Endoribonuclease YbeY (166 aa).

Zn(2+)-binding residues include histidine 132, histidine 136, and histidine 142.

Belongs to the endoribonuclease YbeY family. It depends on Zn(2+) as a cofactor.

The protein localises to the cytoplasm. Its function is as follows. Single strand-specific metallo-endoribonuclease involved in late-stage 70S ribosome quality control and in maturation of the 3' terminus of the 16S rRNA. In Clostridium botulinum (strain Eklund 17B / Type B), this protein is Endoribonuclease YbeY.